We begin with the raw amino-acid sequence, 1241 residues long: Plasma membrane calcium-transporting ATPase 4 (1241 aa).

The Cytoplasmic portion of the chain corresponds to 1–92 (MTNPSDRVLP…NVIPPKKPKT (92 aa)). S13 is modified (phosphoserine). Residues 93-113 (FLELVWEALQDVTLIILEIAA) form a helical membrane-spanning segment. The Extracellular portion of the chain corresponds to 114–150 (IISLVLSFYRPAGEENELCGQVATTPEDENEAQAGWI). A helical transmembrane segment spans residues 151-171 (EGAAILFSVIIVVLVTAFNDW). Residues 172-356 (SKEKQFRGLQ…KEKSVLQGKL (185 aa)) lie on the Cytoplasmic side of the membrane. A disordered region spans residues 294-318 (EGEKKKKGKKQGVPENRNKAKTQDG). Residue S328 is modified to Phosphoserine. A helical transmembrane segment spans residues 357 to 376 (TRLAVQIGKAGLLMSALTVF). Topologically, residues 377 to 409 (ILILYFVIDNFVINRRPWLPECTPIYIQYFVKF) are extracellular. Residues 410–427 (FIIGITVLVVAVPEGLPL) traverse the membrane as a helical segment. The Cytoplasmic segment spans residues 428–840 (AVTISLAYSV…MWGRNVYDSI (413 aa)). The active-site 4-aspartylphosphate intermediate is the D465. Residues D785 and D789 each contribute to the Mg(2+) site. A helical membrane pass occupies residues 841–860 (SKFLQFQLTVNVVAVIVAFT). Residues 861–870 (GACITQDSPL) lie on the Extracellular side of the membrane. The chain crosses the membrane as a helical span at residues 871–891 (KAVQMLWVNLIMDTFASLALA). Over 892–911 (TEPPTESLLKRRPYGRNKPL) the chain is Cytoplasmic. Residues 912-934 (ISRTMMKNILGHAFYQLIVIFIL) form a helical membrane-spanning segment. Over 935–952 (VFAGEKFFDIDSGRKAPL) the chain is Extracellular. A helical transmembrane segment spans residues 953-974 (HSPPSQHYTIVFNTFVLMQLFN). The Cytoplasmic portion of the chain corresponds to 975 to 993 (EINSRKIHGEKNVFSGIYR). Residues 994–1015 (NIIFCSVVLGTFICQIFIVEFG) form a helical membrane-spanning segment. Residues 1016 to 1025 (GKPFSCTSLS) lie on the Extracellular side of the membrane. The chain crosses the membrane as a helical span at residues 1026–1047 (LSQWLWCLFIGIGELLWGQFIS). Residues 1048–1241 (AIPTRSLKFL…SSLQSLETSV (194 aa)) are Cytoplasmic-facing. Residues 1086-1103 (LRRGQILWFRGLNRIQTQ) are calmodulin-binding subdomain A. T1102 carries the post-translational modification Phosphothreonine; by PKC. The interval 1104–1113 (IDVINTFQTG) is calmodulin-binding subdomain B.

This sequence belongs to the cation transport ATPase (P-type) (TC 3.A.3) family. Type IIB subfamily. Interacts with PDZD11. Interacts with SLC35G1 and STIM1. Interacts with calmodulin. Isoform XB is the most abundant isoform and is expressed ubiquitously. Isoforms containing segment Z have only been detected in heart, while isoforms containing segment a have been found in heart, stomach and brain cortex.

The protein resides in the cell membrane. It localises to the cell projection. Its subcellular location is the cilium. The protein localises to the flagellum membrane. The enzyme catalyses Ca(2+)(in) + ATP + H2O = Ca(2+)(out) + ADP + phosphate + H(+). Its activity is regulated as follows. Activated by calcium/calmodulin. Its function is as follows. Calcium/calmodulin-regulated and magnesium-dependent enzyme that catalyzes the hydrolysis of ATP coupled with the transport of calcium out of the cell. By regulating sperm cell calcium homeostasis, may play a role in sperm motility. In Homo sapiens (Human), this protein is Plasma membrane calcium-transporting ATPase 4.